A 157-amino-acid chain; its full sequence is MAEVEYRCFVGGLAWATNDESLEQAFSQFGDITDSKIINDRETGRSRGFGFVTFKDEKSMRDAIEGMNGQELDGRNITVNEAQSRGSGGGGGRREGGGGGYGGGGGYGGRREGGGGGGYGGRREGGGGGYGGGGGGYGGRREGGDGGYGGGGGGSRW.

The region spanning 6–84 (YRCFVGGLAW…RNITVNEAQS (79 aa)) is the RRM domain. A disordered region spans residues 70–157 (QELDGRNITV…YGGGGGGSRW (88 aa)). 2 stretches are compositionally biased toward gly residues: residues 86-138 (GSGG…GGYG) and 145-157 (DGGYGGGGGGSRW).

Functionally, may play a role in the biosynthesis and processing of heterogeneous nuclear RNA and in the maturation of specific mRNAs in response to wounding. The chain is Glycine-rich RNA-binding protein from Daucus carota (Wild carrot).